The sequence spans 154 residues: Protein-export protein SecB (154 aa).

The protein belongs to the SecB family. In terms of assembly, homotetramer, a dimer of dimers. One homotetramer interacts with 1 SecA dimer.

Its subcellular location is the cytoplasm. Functionally, one of the proteins required for the normal export of preproteins out of the cell cytoplasm. It is a molecular chaperone that binds to a subset of precursor proteins, maintaining them in a translocation-competent state. It also specifically binds to its receptor SecA. In Blochmanniella pennsylvanica (strain BPEN), this protein is Protein-export protein SecB.